The chain runs to 145 residues: D-aminoacyl-tRNA deacylase (145 aa).

The Gly-cisPro motif, important for rejection of L-amino acids motif lies at 137 to 138 (GP).

It belongs to the DTD family. In terms of assembly, homodimer.

The protein localises to the cytoplasm. It carries out the reaction glycyl-tRNA(Ala) + H2O = tRNA(Ala) + glycine + H(+). The catalysed reaction is a D-aminoacyl-tRNA + H2O = a tRNA + a D-alpha-amino acid + H(+). Functionally, an aminoacyl-tRNA editing enzyme that deacylates mischarged D-aminoacyl-tRNAs. Also deacylates mischarged glycyl-tRNA(Ala), protecting cells against glycine mischarging by AlaRS. Acts via tRNA-based rather than protein-based catalysis; rejects L-amino acids rather than detecting D-amino acids in the active site. By recycling D-aminoacyl-tRNA to D-amino acids and free tRNA molecules, this enzyme counteracts the toxicity associated with the formation of D-aminoacyl-tRNA entities in vivo and helps enforce protein L-homochirality. This Limosilactobacillus fermentum (strain NBRC 3956 / LMG 18251) (Lactobacillus fermentum) protein is D-aminoacyl-tRNA deacylase.